A 443-amino-acid polypeptide reads, in one-letter code: tRNA-2-methylthio-N(6)-dimethylallyladenosine synthase (443 aa).

The 115-residue stretch at 12–126 (KTFRVKSFGC…LPEMVADAAA (115 aa)) folds into the MTTase N-terminal domain. [4Fe-4S] cluster is bound by residues C21, C57, C89, C162, C166, and C169. The region spanning 148 to 380 (RKSAPTAFLT…QAALNRDQLA (233 aa)) is the Radical SAM core domain. Residues 383–443 (KASVGKTCEV…GPNSISGRLA (61 aa)) form the TRAM domain.

This sequence belongs to the methylthiotransferase family. MiaB subfamily. As to quaternary structure, monomer. Requires [4Fe-4S] cluster as cofactor.

It is found in the cytoplasm. It carries out the reaction N(6)-dimethylallyladenosine(37) in tRNA + (sulfur carrier)-SH + AH2 + 2 S-adenosyl-L-methionine = 2-methylsulfanyl-N(6)-dimethylallyladenosine(37) in tRNA + (sulfur carrier)-H + 5'-deoxyadenosine + L-methionine + A + S-adenosyl-L-homocysteine + 2 H(+). Its function is as follows. Catalyzes the methylthiolation of N6-(dimethylallyl)adenosine (i(6)A), leading to the formation of 2-methylthio-N6-(dimethylallyl)adenosine (ms(2)i(6)A) at position 37 in tRNAs that read codons beginning with uridine. The protein is tRNA-2-methylthio-N(6)-dimethylallyladenosine synthase of Novosphingobium aromaticivorans (strain ATCC 700278 / DSM 12444 / CCUG 56034 / CIP 105152 / NBRC 16084 / F199).